Consider the following 243-residue polypeptide: Pyridoxine 5'-phosphate synthase (243 aa).

A 3-amino-2-oxopropyl phosphate-binding site is contributed by Asn-9. Position 11-12 (11-12 (DH)) interacts with 1-deoxy-D-xylulose 5-phosphate. Arg-20 is a binding site for 3-amino-2-oxopropyl phosphate. The Proton acceptor role is filled by His-45. 1-deoxy-D-xylulose 5-phosphate contacts are provided by Arg-47 and His-52. The Proton acceptor role is filled by Glu-72. Thr-102 lines the 1-deoxy-D-xylulose 5-phosphate pocket. His-193 functions as the Proton donor in the catalytic mechanism. Residues Gly-194 and 215 to 216 (GH) each bind 3-amino-2-oxopropyl phosphate.

The protein belongs to the PNP synthase family. In terms of assembly, homooctamer; tetramer of dimers.

It localises to the cytoplasm. It catalyses the reaction 3-amino-2-oxopropyl phosphate + 1-deoxy-D-xylulose 5-phosphate = pyridoxine 5'-phosphate + phosphate + 2 H2O + H(+). It participates in cofactor biosynthesis; pyridoxine 5'-phosphate biosynthesis; pyridoxine 5'-phosphate from D-erythrose 4-phosphate: step 5/5. Its function is as follows. Catalyzes the complicated ring closure reaction between the two acyclic compounds 1-deoxy-D-xylulose-5-phosphate (DXP) and 3-amino-2-oxopropyl phosphate (1-amino-acetone-3-phosphate or AAP) to form pyridoxine 5'-phosphate (PNP) and inorganic phosphate. The chain is Pyridoxine 5'-phosphate synthase from Yersinia pestis.